Here is a 228-residue protein sequence, read N- to C-terminus: MNKIITIIPISSFNNSKTRLSPFLSESERTNLLKVMLKDIVSNIQDHVSDIIVTSKDEYVLNYAKYLNLNVFKEKEHEHDFLNNAISDAISYISKNYDNYSVMILPADIPLFNSRNMKYILKNRDDFIISPSKGGGTNLLYINREYNYKPLFGAFSFFKHVQEAKNNNLDVNIYDSFYLSLDVNTPEDLGEILLHGRNTHTYNYLSNLNIGVESNHGKERLYVYRKNE.

This sequence belongs to the CofC family. In terms of assembly, homodimer.

It carries out the reaction (2S)-2-phospholactate + GTP + H(+) = (2S)-lactyl-2-diphospho-5'-guanosine + diphosphate. It participates in cofactor biosynthesis; coenzyme F420 biosynthesis. In terms of biological role, guanylyltransferase that catalyzes the activation of (2S)-2-phospholactate (2-PL) as (2S)-lactyl-2-diphospho-5'-guanosine, via the condensation of 2-PL with GTP. It is involved in the biosynthesis of coenzyme F420, a hydride carrier cofactor. In Methanosphaera stadtmanae (strain ATCC 43021 / DSM 3091 / JCM 11832 / MCB-3), this protein is 2-phospho-L-lactate guanylyltransferase.